The chain runs to 128 residues: Large ribosomal subunit protein bL12 (128 aa).

The protein belongs to the bacterial ribosomal protein bL12 family. In terms of assembly, homodimer. Part of the ribosomal stalk of the 50S ribosomal subunit. Forms a multimeric L10(L12)X complex, where L10 forms an elongated spine to which 2 to 4 L12 dimers bind in a sequential fashion. Binds GTP-bound translation factors.

In terms of biological role, forms part of the ribosomal stalk which helps the ribosome interact with GTP-bound translation factors. Is thus essential for accurate translation. This Trichormus variabilis (strain ATCC 29413 / PCC 7937) (Anabaena variabilis) protein is Large ribosomal subunit protein bL12.